The sequence spans 512 residues: Cytochrome P450 monooxygenase astB (512 aa).

Residues 5 to 25 (DLSFPAAIGAVFGAVAISVAA) traverse the membrane as a helical segment. C452 provides a ligand contact to heme.

This sequence belongs to the cytochrome P450 family. Heme serves as cofactor.

It is found in the membrane. The protein operates within secondary metabolite biosynthesis; terpenoid biosynthesis. Its function is as follows. Cytochrome P450 monooxygenase; part of the gene cluster that mediates the biosynthesis of the sesquiterpenoid aspterric acid (AA), an inhibitor of dihydroxy-acid dehydratase (DHAD) effective as an herbicide. AstB catalyzes the second step within the pathway and converts (-)-daucane produced by the terpene cyclase astA into an alpha-epoxy carboxylate intermediate which is further converted into the tricyclic aspterric acid by the cytochrome P450 monooxygenase astC. This chain is Cytochrome P450 monooxygenase astB, found in Aspergillus terreus (strain NIH 2624 / FGSC A1156).